Here is a 462-residue protein sequence, read N- to C-terminus: Sodium-coupled neutral amino acid transporter 7 (462 aa).

Ser28 bears the Phosphoserine mark. Transmembrane regions (helical) follow at residues 56–76 (AIFI…PAAF), 82–102 (VAAG…GLVI), 130–150 (LCEV…LIII), 178–198 (FTIS…REIG), 205–225 (FLSV…YIWP), 239–259 (ASWM…QCHV), 282–302 (AAMV…FLTF), 319–339 (MAVA…YPIL), 371–391 (VLQT…IPDI), 395–415 (ISVI…LCLI), and 428–448 (ASWW…AFIF).

It belongs to the amino acid/polyamine transporter 2 family. As to quaternary structure, interacts with the mTORC1 complex; this interaction mediates the recruitment of mTORC1 to the lysosome and its subsequent activation.

Its subcellular location is the lysosome membrane. It localises to the cell projection. The protein resides in the axon. The enzyme catalyses L-asparagine(in) + Na(+)(in) = L-asparagine(out) + Na(+)(out). The catalysed reaction is L-glutamine(in) + Na(+)(in) = L-glutamine(out) + Na(+)(out). In terms of biological role, symporter that selectively cotransports sodium ions and amino acids, such as L-glutamine and L-asparagine from the lysosome into the cytoplasm and may participates in mTORC1 activation. The transport activity requires an acidic lysosomal lumen. The chain is Sodium-coupled neutral amino acid transporter 7 from Homo sapiens (Human).